We begin with the raw amino-acid sequence, 258 residues long: C4b-binding protein beta chain (258 aa).

Residues 1–15 (MLCLVVCCLIWLISA) form the signal peptide. The Sushi 1; atypical; lacks a Cys domain occupies 18–75 (GSCSEPPPVNNSVFVGKETEEQILGIYLCIKGYHLVGKKSLVFDPSKEWNSTLPECLL). N-linked (GlcNAc...) asparagine glycans are attached at residues Asn-27, Asn-67, Asn-89, Asn-95, and Asn-114. 5 disulfides stabilise this stretch: Cys-46-Cys-73, Cys-78-Cys-118, Cys-104-Cys-131, Cys-136-Cys-176, and Cys-162-Cys-188. Sushi domains lie at 76 to 133 (GHCP…ICRS) and 134 to 190 (RDCE…TCES). Residue Asn-218 is glycosylated (N-linked (GlcNAc...) asparagine).

Disulfide-linked complex of alpha and beta chains.

The protein resides in the secreted. Controls the classical pathway of complement activation. It binds as a cofactor to C3b/C4b inactivator (C3bINA), which then hydrolyzes the complement fragment C4b. It also accelerates the degradation of the C4bC2a complex (C3 convertase) by dissociating the complement fragment C2a. It also interacts with anticoagulant protein S and with serum amyloid P component. The sequence is that of C4b-binding protein beta chain (C4bpb) from Rattus norvegicus (Rat).